The chain runs to 231 residues: NAD(+) ADP-ribosyltransferase (231 aa).

The enzyme catalyses NAD(+) + (ADP-D-ribosyl)n-acceptor = nicotinamide + (ADP-D-ribosyl)n+1-acceptor + H(+).. Its activity is regulated as follows. Activity increases up to 5-6 times with Mg(2+) at 50 uM or higher ion concentration. 3-aminobenzamide (3-ABA) inhibits the activity by up to half and nicotinamide to a lesser extent. Zn(2+) inhibits the activity to half-maximal rate but at 500 uM concentration of the ion. Functionally, catalyzes auto- and hetero-ADP ribosylation and produces short oligomers by elongating the ADP-ribose chain (up to 6-mer). Binds DNA non-specifically but with high affinity. Forms very stable complexes with circular DNA wherein the circular DNA confers thermostability compared to linear DNA. In Saccharolobus solfataricus (Sulfolobus solfataricus), this protein is NAD(+) ADP-ribosyltransferase.